The primary structure comprises 182 residues: RNA pyrophosphohydrolase (182 aa).

The Nudix hydrolase domain maps to 6–149; it reads GYRPNVGIIL…KRLVYEQALN (144 aa). The Nudix box signature appears at 38–59; the sequence is GGIKRGETPEEAMFRELYEEVG. Positions 162–182 are disordered; the sequence is PRHKKEQEPFSDVVDSVRSEE.

Belongs to the Nudix hydrolase family. RppH subfamily. A divalent metal cation is required as a cofactor.

Its function is as follows. Accelerates the degradation of transcripts by removing pyrophosphate from the 5'-end of triphosphorylated RNA, leading to a more labile monophosphorylated state that can stimulate subsequent ribonuclease cleavage. The chain is RNA pyrophosphohydrolase from Dechloromonas aromatica (strain RCB).